Reading from the N-terminus, the 89-residue chain is Protein RALF-like 5 (89 aa).

Positions 1-25 (MLKAQVFMFVTVLVFVCVFINSNDA) are cleaved as a signal peptide. 2 disulfides stabilise this stretch: cysteine 39/cysteine 48 and cysteine 61/cysteine 67.

This sequence belongs to the plant rapid alkalinization factor (RALF) family.

The protein localises to the secreted. Cell signaling peptide that may regulate plant stress, growth, and development. Mediates a rapid alkalinization of extracellular space by mediating a transient increase in the cytoplasmic Ca(2+) concentration leading to a calcium-dependent signaling events through a cell surface receptor and a concomitant activation of some intracellular mitogen-activated protein kinases. This is Protein RALF-like 5 (RALFL5) from Arabidopsis thaliana (Mouse-ear cress).